Reading from the N-terminus, the 239-residue chain is Hydroxyacylglutathione hydrolase (239 aa).

Zn(2+) contacts are provided by His-54, His-56, Asp-58, His-59, His-112, Asp-131, and His-169.

Belongs to the metallo-beta-lactamase superfamily. Glyoxalase II family. As to quaternary structure, monomer. Zn(2+) is required as a cofactor.

The catalysed reaction is an S-(2-hydroxyacyl)glutathione + H2O = a 2-hydroxy carboxylate + glutathione + H(+). Its pathway is secondary metabolite metabolism; methylglyoxal degradation; (R)-lactate from methylglyoxal: step 2/2. In terms of biological role, thiolesterase that catalyzes the hydrolysis of S-D-lactoyl-glutathione to form glutathione and D-lactic acid. This chain is Hydroxyacylglutathione hydrolase, found in Pelagibacter ubique (strain HTCC1062).